Reading from the N-terminus, the 266-residue chain is Thymidylate synthase (266 aa).

Arg-24 is a binding site for dUMP. His-54 contacts (6R)-5,10-methylene-5,6,7,8-tetrahydrofolate. DUMP is bound at residue 129 to 130 (RR). Cys-149 acts as the Nucleophile in catalysis. Residues 169-172 (RSAD), Asn-180, and 210-212 (HIY) contribute to the dUMP site. Asp-172 contributes to the (6R)-5,10-methylene-5,6,7,8-tetrahydrofolate binding site. Ala-265 lines the (6R)-5,10-methylene-5,6,7,8-tetrahydrofolate pocket.

The protein belongs to the thymidylate synthase family. Bacterial-type ThyA subfamily. As to quaternary structure, homodimer.

Its subcellular location is the cytoplasm. The catalysed reaction is dUMP + (6R)-5,10-methylene-5,6,7,8-tetrahydrofolate = 7,8-dihydrofolate + dTMP. It participates in pyrimidine metabolism; dTTP biosynthesis. Catalyzes the reductive methylation of 2'-deoxyuridine-5'-monophosphate (dUMP) to 2'-deoxythymidine-5'-monophosphate (dTMP) while utilizing 5,10-methylenetetrahydrofolate (mTHF) as the methyl donor and reductant in the reaction, yielding dihydrofolate (DHF) as a by-product. This enzymatic reaction provides an intracellular de novo source of dTMP, an essential precursor for DNA biosynthesis. The protein is Thymidylate synthase of Mycolicibacterium smegmatis (strain ATCC 700084 / mc(2)155) (Mycobacterium smegmatis).